Consider the following 628-residue polypeptide: MFDGYDSCSEDTSSSSSSEESEEEVAPLPSNLPIIKNNGQVYTYPDGKSGMATCEMCGMVGVRDAFYSKTKRFCSVSCSRSYSSNSKKASILARLQGKPPTKKAKVLQKQPLVAKLAAYAQYQATLQNQAKTKAAVSMEGFSWGNYINSNSFIAAPVTCFKHAPMGTCWGDISENVRVEVPNTDCSLPTKVFWIAGIVKLAGYNALLRYEGFENDSGLDFWCNICGSDIHPVGWCAASGKPLVPPRTIQHKYTNWKAFLVKRLTGAKTLPPDFSQKVSESMQYPFKPCMRVEVVDKRHLCRTRVAVVESVIGGRLRLVYEESEDRTDDFWCHMHSPLIHHIGWSRSIGHRFKRSDITKKQDGHFDTPPHLFAKVKEVDQSGEWFKEGMKLEAIDPLNLSTICVATIRKVLADGFLMIGIDGSEAADGSDWFCYHATSPSIFPVGFCEINMIELTPPRGYTKLPFKWFDYLRETGSIAAPVKLFNKDVPNHGFRVGMKLEAVDLMEPRLICVATVTRIIHRLLRIHFDGWEEEYDQWVDCESPDLYPVGWCQLTGYQLQPPASQSSRENQSASSKQKKKAKSQQYKGHKKMTTLQLKEELLDGEDYNFLQGASDQESNGSANFYIKQEP.

Positions 1-31 are disordered; that stretch reads MFDGYDSCSEDTSSSSSSEESEEEVAPLPSN. An FCS-type zinc finger spans residues 45-80; sequence PDGKSGMATCEMCGMVGVRDAFYSKTKRFCSVSCSR. The Zn(2+) site is built by C54, C57, C74, and C78. At K115 the chain carries N6-acetyllysine. MBT repeat units lie at residues 141-245, 253-350, 351-456, and 464-560; these read FSWG…LVPP, TNWK…IGHR, FKRS…LTPP, and FKWF…LQPP. 2 disordered regions span residues 560–590 and 606–628; these read PASQ…HKKM and NFLQ…KQEP. Residues 562–573 are compositionally biased toward low complexity; it reads SQSSRENQSASS. A compositionally biased stretch (basic residues) spans 574–590; that stretch reads KQKKKAKSQQYKGHKKM. The segment covering 609-620 has biased composition (polar residues); it reads QGASDQESNGSA.

In terms of assembly, monomer. Component of the NuA4 histone acetyltransferase complex. Interacts with EPC1; interaction is direct and promotes recruitment of MBTD1 into the NuA4 histone acetyltransferase complex.

The protein localises to the nucleus. It localises to the chromosome. In terms of biological role, chromatin reader component of the NuA4 histone acetyltransferase complex, a multiprotein complex involved in transcriptional activation of select genes principally by acetylation of nucleosomal histones H4 and H2A. The NuA4 complex plays a direct role in repair of DNA double-strand breaks (DSBs) by promoting homologous recombination (HR). MBTD1 specifically recognizes and binds monomethylated and dimethylated 'Lys-20' on histone H4 (H4K20me1 and H4K20me2, respectively). In the NuA4 complex, MBTD1 promotes recruitment of the complex to H4K20me marks by competing with TP53BP1 for binding to H4K20me. Following recruitment to H4K20me at DNA breaks, the NuA4 complex catalyzes acetylation of 'Lys-15' on histone H2A (H2AK15), blocking the ubiquitination mark required for TP53BP1 localization at DNA breaks, thereby promoting homologous recombination (HR). This is MBT domain-containing protein 1 from Homo sapiens (Human).